A 383-amino-acid chain; its full sequence is TnpB-like protein ORF383B (383 aa).

Residues Cys-328, Cys-331, Cys-345, and Cys-348 each coordinate Zn(2+).

The protein in the N-terminal section; belongs to the transposase 2 family. It in the C-terminal section; belongs to the transposase 35 family.

The chain is TnpB-like protein ORF383B from Acidianus convivator (ATV).